The following is a 91-amino-acid chain: Non-specific lipid-transfer protein 1 (91 aa).

4 cysteine pairs are disulfide-bonded: Cys-3-Cys-50, Cys-13-Cys-27, Cys-28-Cys-73, and Cys-48-Cys-87.

This sequence belongs to the plant LTP family.

Functionally, plant non-specific lipid-transfer proteins transfer phospholipids as well as galactolipids across membranes. May play a role in wax or cutin deposition in the cell walls of expanding epidermal cells and certain secretory tissues. The protein is Non-specific lipid-transfer protein 1 of Morus nigra (Black mulberry).